The sequence spans 341 residues: UDP-glucuronic acid decarboxylase 5 (341 aa).

The segment at 1 to 21 is disordered; the sequence is MASSDKQTSPKPPPSPSPLRN. 60 to 85 serves as a coordination point for NAD(+); sequence DNYFTGSKDNLKKWIGHPRFELIRHD. Substrate is bound at residue arginine 169. The active-site Proton acceptor is the tyrosine 172. 172 to 176 provides a ligand contact to NAD(+); sequence YDEGK. Residue asparagine 201 participates in substrate binding. Arginine 213 is an NAD(+) binding site. Substrate is bound by residues 214 to 218, 231 to 238, and 298 to 302; these read VVSNF, QKPGTQTR, and DPRQR.

It belongs to the NAD(P)-dependent epimerase/dehydratase family. UDP-glucuronic acid decarboxylase subfamily. Requires NAD(+) as cofactor.

The protein localises to the cytoplasm. It catalyses the reaction UDP-alpha-D-glucuronate + H(+) = UDP-alpha-D-xylose + CO2. It functions in the pathway nucleotide-sugar biosynthesis; UDP-alpha-D-xylose biosynthesis; UDP-alpha-D-xylose from UDP-alpha-D-glucuronate: step 1/1. In terms of biological role, catalyzes the NAD-dependent decarboxylation of UDP-glucuronic acid to UDP-xylose. Necessary for the biosynthesis of the core tetrasaccharide in glycosaminoglycan biosynthesis. The chain is UDP-glucuronic acid decarboxylase 5 (UXS5) from Arabidopsis thaliana (Mouse-ear cress).